A 455-amino-acid chain; its full sequence is D-arabinitol 4-dehydrogenase (455 aa).

Belongs to the mannitol dehydrogenase family. In terms of assembly, monomer.

The catalysed reaction is D-arabinitol + NAD(+) = D-xylulose + NADH + H(+). Its pathway is carbohydrate metabolism; D-arabinitol metabolism. The chain is D-arabinitol 4-dehydrogenase (dalD) from Klebsiella pneumoniae.